Consider the following 280-residue polypeptide: Thymidylate synthase (280 aa).

Arg21 serves as a coordination point for dUMP. A (6R)-5,10-methylene-5,6,7,8-tetrahydrofolate-binding site is contributed by His51. 142–143 (RR) serves as a coordination point for dUMP. Residue Cys162 is the Nucleophile of the active site. DUMP contacts are provided by residues 182-185 (RSAD), Asn193, and 223-225 (HLY). Asp185 contributes to the (6R)-5,10-methylene-5,6,7,8-tetrahydrofolate binding site. Ala279 lines the (6R)-5,10-methylene-5,6,7,8-tetrahydrofolate pocket.

This sequence belongs to the thymidylate synthase family. Bacterial-type ThyA subfamily. In terms of assembly, homodimer.

It is found in the cytoplasm. It catalyses the reaction dUMP + (6R)-5,10-methylene-5,6,7,8-tetrahydrofolate = 7,8-dihydrofolate + dTMP. It participates in pyrimidine metabolism; dTTP biosynthesis. In terms of biological role, catalyzes the reductive methylation of 2'-deoxyuridine-5'-monophosphate (dUMP) to 2'-deoxythymidine-5'-monophosphate (dTMP) while utilizing 5,10-methylenetetrahydrofolate (mTHF) as the methyl donor and reductant in the reaction, yielding dihydrofolate (DHF) as a by-product. This enzymatic reaction provides an intracellular de novo source of dTMP, an essential precursor for DNA biosynthesis. This is Thymidylate synthase from Acinetobacter baylyi (strain ATCC 33305 / BD413 / ADP1).